The sequence spans 210 residues: DNA dC-&gt;dU-editing enzyme APOBEC-3H (210 aa).

Residues 4–126 (LTAKTFSLQF…PNYQEGLLLL (123 aa)) form the CMP/dCMP-type deaminase domain. His-54 contributes to the Zn(2+) binding site. The active-site Proton donor is Glu-56. Positions 85 and 88 each coordinate Zn(2+). The tract at residues 182-210 (SRSVDVLENGLRSLQLGPVTPSSSIRNSR) is necessary and sufficient for localization to the cytoplasm.

It belongs to the cytidine and deoxycytidylate deaminase family. As to quaternary structure, homodimer. Zn(2+) is required as a cofactor.

Its subcellular location is the cytoplasm. It carries out the reaction a 2'-deoxycytidine in single-stranded DNA + H2O + H(+) = a 2'-deoxyuridine in single-stranded DNA + NH4(+). Antiviral activity is neutralized by the simian immunodeficiency virus rhesus (SIV-mac) virion infectivity factor (VIF). In terms of biological role, DNA deaminase (cytidine deaminase) which acts as an inhibitor of retrovirus replication and retrotransposon mobility via deaminase-dependent and -independent mechanisms. Exhibits antiviral activity against vif-deficient HIV-1. After the penetration of retroviral nucleocapsids into target cells of infection and the initiation of reverse transcription, it can induce the conversion of cytosine to uracil in the minus-sense single-strand viral DNA, leading to G-to-A hypermutations in the subsequent plus-strand viral DNA. The resultant detrimental levels of mutations in the proviral genome, along with a deamination-independent mechanism that works prior to the proviral integration, together exert efficient antiretroviral effects in infected target cells. Selectively targets single-stranded DNA and does not deaminate double-stranded DNA or single- or double-stranded RNA. This Macaca mulatta (Rhesus macaque) protein is DNA dC-&gt;dU-editing enzyme APOBEC-3H.